Here is a 339-residue protein sequence, read N- to C-terminus: MILGIESSCDDSSVALLDIKNLKLLYHKKISQESEHSPFGGVVPELAARLHTRALPALLEEIKPKFKDIKAIAVTNEPGLSVSLIGGVSMAKALSVALNVPLIAVNHLVGHIYSLFLDCEARFPLGVLLVSGGHTMVLDIDAAGKISLLAGTSDDSFGESFDKVAKMMQLGYPGGAAVQNLAWQCKDKRRFKFTIPFLHDKRLEYSFSGLKNQVRLEIEKIKGQNLAGATDRELSNDDMADICYAFENAACEHIMDKLTKIFKERSFKRFGIVGGASANLNLRSRIERLCLENGCELLLAPLEFCSDNAAMIARAGREKYLKGGFVKHNELNINPRVKF.

Residues His107 and His111 each coordinate Fe cation. Substrate-binding positions include 129–133, Asp162, Gly175, and Asn279; that span reads LVSGG. Asp307 contacts Fe cation.

This sequence belongs to the KAE1 / TsaD family. The cofactor is Fe(2+).

Its subcellular location is the cytoplasm. The enzyme catalyses L-threonylcarbamoyladenylate + adenosine(37) in tRNA = N(6)-L-threonylcarbamoyladenosine(37) in tRNA + AMP + H(+). In terms of biological role, required for the formation of a threonylcarbamoyl group on adenosine at position 37 (t(6)A37) in tRNAs that read codons beginning with adenine. Is involved in the transfer of the threonylcarbamoyl moiety of threonylcarbamoyl-AMP (TC-AMP) to the N6 group of A37, together with TsaE and TsaB. TsaD likely plays a direct catalytic role in this reaction. This is tRNA N6-adenosine threonylcarbamoyltransferase from Campylobacter curvus (strain 525.92).